The primary structure comprises 496 residues: L-arabinose isomerase (496 aa).

Positions 302, 329, 346, and 445 each coordinate Mn(2+).

This sequence belongs to the arabinose isomerase family. Mn(2+) serves as cofactor.

It catalyses the reaction beta-L-arabinopyranose = L-ribulose. The protein operates within carbohydrate degradation; L-arabinose degradation via L-ribulose; D-xylulose 5-phosphate from L-arabinose (bacterial route): step 1/3. In terms of biological role, catalyzes the conversion of L-arabinose to L-ribulose. In Thermotoga sp. (strain RQ2), this protein is L-arabinose isomerase.